A 251-amino-acid chain; its full sequence is Triosephosphate isomerase (251 aa).

Residue 9–11 (NWK) participates in substrate binding. The active-site Electrophile is the histidine 95. Glutamate 167 acts as the Proton acceptor in catalysis. Substrate is bound by residues glycine 173, serine 213, and 234 to 235 (GG).

Belongs to the triosephosphate isomerase family. Homodimer.

The protein localises to the cytoplasm. It catalyses the reaction D-glyceraldehyde 3-phosphate = dihydroxyacetone phosphate. It participates in carbohydrate biosynthesis; gluconeogenesis. It functions in the pathway carbohydrate degradation; glycolysis; D-glyceraldehyde 3-phosphate from glycerone phosphate: step 1/1. Involved in the gluconeogenesis. Catalyzes stereospecifically the conversion of dihydroxyacetone phosphate (DHAP) to D-glyceraldehyde-3-phosphate (G3P). The protein is Triosephosphate isomerase of Latilactobacillus sakei subsp. sakei (strain 23K) (Lactobacillus sakei subsp. sakei).